The sequence spans 227 residues: UPF0173 metal-dependent hydrolase Tlet_1100 (227 aa).

This sequence belongs to the UPF0173 family.

This is UPF0173 metal-dependent hydrolase Tlet_1100 from Pseudothermotoga lettingae (strain ATCC BAA-301 / DSM 14385 / NBRC 107922 / TMO) (Thermotoga lettingae).